Consider the following 228-residue polypeptide: Lipoprotein-releasing system ATP-binding protein LolD (228 aa).

An ABC transporter domain is found at 8-228; that stretch reads LQAKKLVKAY…ELHDGLLRRL (221 aa). 44–51 serves as a coordination point for ATP; it reads GASGSGKS.

This sequence belongs to the ABC transporter superfamily. Lipoprotein translocase (TC 3.A.1.125) family. As to quaternary structure, the complex is composed of two ATP-binding proteins (LolD) and two transmembrane proteins (LolC and LolE).

The protein resides in the cell inner membrane. Part of the ABC transporter complex LolCDE involved in the translocation of mature outer membrane-directed lipoproteins, from the inner membrane to the periplasmic chaperone, LolA. Responsible for the formation of the LolA-lipoprotein complex in an ATP-dependent manner. The polypeptide is Lipoprotein-releasing system ATP-binding protein LolD (Alcanivorax borkumensis (strain ATCC 700651 / DSM 11573 / NCIMB 13689 / SK2)).